The primary structure comprises 358 residues: 3-dehydroquinate synthase (358 aa).

NAD(+) contacts are provided by residues 69–74 (DGEAHK), 103–107 (GVIGD), 127–128 (TT), Lys140, Lys149, and 167–170 (CLRT). Glu182, His245, and His262 together coordinate Zn(2+).

This sequence belongs to the sugar phosphate cyclases superfamily. Dehydroquinate synthase family. Co(2+) serves as cofactor. It depends on Zn(2+) as a cofactor. Requires NAD(+) as cofactor.

It is found in the cytoplasm. It carries out the reaction 7-phospho-2-dehydro-3-deoxy-D-arabino-heptonate = 3-dehydroquinate + phosphate. It participates in metabolic intermediate biosynthesis; chorismate biosynthesis; chorismate from D-erythrose 4-phosphate and phosphoenolpyruvate: step 2/7. Its function is as follows. Catalyzes the conversion of 3-deoxy-D-arabino-heptulosonate 7-phosphate (DAHP) to dehydroquinate (DHQ). The polypeptide is 3-dehydroquinate synthase (Tolumonas auensis (strain DSM 9187 / NBRC 110442 / TA 4)).